The chain runs to 119 residues: Large ribosomal subunit protein bL20c (119 aa).

The protein belongs to the bacterial ribosomal protein bL20 family.

Its subcellular location is the plastid. It is found in the chloroplast. Its function is as follows. Binds directly to 23S ribosomal RNA and is necessary for the in vitro assembly process of the 50S ribosomal subunit. It is not involved in the protein synthesizing functions of that subunit. In Zea mays (Maize), this protein is Large ribosomal subunit protein bL20c (rpl20).